A 299-amino-acid chain; its full sequence is Peroxisomal biogenesis factor 19 (299 aa).

A disordered region spans residues 1–63; the sequence is MAAAEEGCSV…SPGDTAKDAL (63 aa). Position 2 is an N-acetylalanine (alanine 2). A docking to the peroxisome membrane and binding to PEX3 region spans residues 2–56; that stretch reads AAAEEGCSVGAEADRELEELLESALDDFDKAKPSPAPPSTTTAPDASGPQKRSPG. Positions 2-91 are necessary for PEX19 function on peroxisome biogenesis; the sequence is AAAEEGCSVG…QATAEFEKAM (90 aa). The span at 16 to 27 shows a compositional bias: acidic residues; it reads RELEELLESALD. Residues serine 35, serine 54, and serine 66 each carry the phosphoserine modification. Threonine 236 is modified (phosphothreonine). Position 296 is a cysteine methyl ester (cysteine 296). Cysteine 296 is lipidated: S-farnesyl cysteine. A propeptide spans 297–299 (removed in mature form); that stretch reads LIM.

The protein belongs to the peroxin-19 family. In terms of assembly, interacts with a broad range of peroxisomal membrane proteins, including PEX3, PEX10, PEX11A, PEX11B, PEX12, PEX13, PEX14 and PEX16, PXMP2/PMP22, PXMP4/PMP24, SLC25A17/PMP34, ABCD1/ALDP, ABCD2/ALDRP, and ABCD3/PMP70. Also interacts with the tumor suppressor CDKN2A/p19ARF. As to quaternary structure, (Microbial infection) Interacts with human cytomegalovirus protein UL37 isoform vMIA; this interaction inhibits the peroxisomal-dependent antiviral signaling. As to expression, ubiquitously expressed. Isoform 1 is strongly predominant in all tissues except in utero where isoform 2 is the main form.

The protein resides in the cytoplasm. The protein localises to the peroxisome membrane. Necessary for early peroxisomal biogenesis. Acts both as a cytosolic chaperone and as an import receptor for peroxisomal membrane proteins (PMPs). Binds and stabilizes newly synthesized PMPs in the cytoplasm by interacting with their hydrophobic membrane-spanning domains, and targets them to the peroxisome membrane by binding to the integral membrane protein PEX3. Excludes CDKN2A from the nucleus and prevents its interaction with MDM2, which results in active degradation of TP53. The polypeptide is Peroxisomal biogenesis factor 19 (Homo sapiens (Human)).